Consider the following 152-residue polypeptide: Em-like protein GEA1 (152 aa).

Composition is skewed to basic and acidic residues over residues 1–17 (MASK…KAKQ) and 32–63 (EAQE…IGHK). Positions 1 to 63 (MASKQLSREE…HEGYQEIGHK (63 aa)) are disordered. 4 repeat units span residues 44–63 (GGQT…IGHK), 64–83 (GGEA…MGHK), 84–103 (GGEA…MGHK), and 104–123 (GGEA…MGRK). Positions 44 to 123 (GGQTRKEQLG…HEGYKEMGRK (80 aa)) are 4 X 20 AA tandem repeats. The interval 116–152 (GYKEMGRKGGLSTMEKSGGERAEEEGIEIDESKFTNK) is disordered.

This sequence belongs to the small hydrophilic plant seed protein family. In seeds only. Specifically located to vascular bundles in the cotyledon and axis of the dry seed. Also found in the epiderm and outer layers of the cortex in the embryo axis.

Its function is as follows. It is thought to provide protection for the cytoplasm during the desiccation stage of embryo development. This is Em-like protein GEA1 (EM1) from Arabidopsis thaliana (Mouse-ear cress).